The chain runs to 229 residues: ATP-dependent dethiobiotin synthetase BioD (229 aa).

12–17 (GVGKTV) lines the ATP pocket. Thr16 is a binding site for Mg(2+). Lys37 is a catalytic residue. Thr41 serves as a coordination point for substrate. ATP-binding positions include Asp53, 112 to 115 (EGAG), and 201 to 203 (PAG). Residues Asp53 and Glu112 each coordinate Mg(2+).

This sequence belongs to the dethiobiotin synthetase family. In terms of assembly, homodimer. It depends on Mg(2+) as a cofactor.

It localises to the cytoplasm. The catalysed reaction is (7R,8S)-7,8-diammoniononanoate + CO2 + ATP = (4R,5S)-dethiobiotin + ADP + phosphate + 3 H(+). It functions in the pathway cofactor biosynthesis; biotin biosynthesis; biotin from 7,8-diaminononanoate: step 1/2. Functionally, catalyzes a mechanistically unusual reaction, the ATP-dependent insertion of CO2 between the N7 and N8 nitrogen atoms of 7,8-diaminopelargonic acid (DAPA, also called 7,8-diammoniononanoate) to form a ureido ring. This chain is ATP-dependent dethiobiotin synthetase BioD, found in Mycobacterium sp. (strain JLS).